The sequence spans 200 residues: LHFPL tetraspan subfamily member 6 protein (200 aa).

The signal sequence occupies residues 1 to 21 (MASSLTCAGVIWALLSFLCAA). 2 helical membrane-spanning segments follow: residues 84–104 (ICTV…LTAI) and 123–143 (GIQF…PLGW). N-linked (GlcNAc...) asparagine glycosylation occurs at N154. A helical membrane pass occupies residues 172–192 (CTGAGAAAAMVLCTWMACFAG).

This sequence belongs to the LHFP family.

The protein resides in the membrane. In Danio rerio (Zebrafish), this protein is LHFPL tetraspan subfamily member 6 protein.